The following is a 339-amino-acid chain: Tetraacyldisaccharide 4'-kinase (339 aa).

58–65 (NVGGVGKT) provides a ligand contact to ATP.

It belongs to the LpxK family.

The enzyme catalyses a lipid A disaccharide + ATP = a lipid IVA + ADP + H(+). The protein operates within glycolipid biosynthesis; lipid IV(A) biosynthesis; lipid IV(A) from (3R)-3-hydroxytetradecanoyl-[acyl-carrier-protein] and UDP-N-acetyl-alpha-D-glucosamine: step 6/6. In terms of biological role, transfers the gamma-phosphate of ATP to the 4'-position of a tetraacyldisaccharide 1-phosphate intermediate (termed DS-1-P) to form tetraacyldisaccharide 1,4'-bis-phosphate (lipid IVA). This Chromobacterium violaceum (strain ATCC 12472 / DSM 30191 / JCM 1249 / CCUG 213 / NBRC 12614 / NCIMB 9131 / NCTC 9757 / MK) protein is Tetraacyldisaccharide 4'-kinase.